Here is a 224-residue protein sequence, read N- to C-terminus: Uracil-DNA glycosylase (224 aa).

Residue Asp62 is the Proton acceptor of the active site.

This sequence belongs to the uracil-DNA glycosylase (UDG) superfamily. UNG family.

The protein localises to the cytoplasm. It carries out the reaction Hydrolyzes single-stranded DNA or mismatched double-stranded DNA and polynucleotides, releasing free uracil.. Its function is as follows. Excises uracil residues from the DNA which can arise as a result of misincorporation of dUMP residues by DNA polymerase or due to deamination of cytosine. In Aliivibrio salmonicida (strain LFI1238) (Vibrio salmonicida (strain LFI1238)), this protein is Uracil-DNA glycosylase.